A 100-amino-acid chain; its full sequence is uncharacterized protein (100 aa).

3 consecutive transmembrane segments (helical) span residues 9–29, 41–61, and 72–92; these read VYTY…SWVV, PYLI…ITAP, and SIPF…FLGI.

It is found in the membrane. This is an uncharacterized protein from Saccharomyces cerevisiae (strain ATCC 204508 / S288c) (Baker's yeast).